We begin with the raw amino-acid sequence, 299 residues long: Apolipoprotein E (299 aa).

Positions Met1–Ala18 are cleaved as a signal peptide. Repeat copies occupy residues Val74 to Val95, Pro96 to Gly117, Ala118 to Gly139, Gln140 to Leu161, Arg162 to Glu183, Arg184 to Ala205, and Gly224 to Glu245. The 8 X 22 AA approximate tandem repeats stretch occupies residues Val74–Glu245. Position 137 is a methionine sulfoxide (Met137). Position 141 is a phosphoserine (Ser141). The tract at residues His152–Arg162 is LDL and other lipoprotein receptors binding. Leu156–Arg159 provides a ligand contact to heparin. The segment at Ala204–Met273 is lipid-binding and lipoprotein association. Position 219-226 (Gly219–Leu226) interacts with heparin. Residues Arg261–Met273 form a specificity for association with VLDL region.

It belongs to the apolipoprotein A1/A4/E family. As to quaternary structure, homotetramer. May interact with ABCA1; functionally associated with ABCA1 in the biogenesis of HDLs. May interact with APP/A4 amyloid-beta peptide; the interaction is extremely stable in vitro but its physiological significance is unclear. May interact with MAPT. May interact with MAP2. In the cerebrospinal fluid, interacts with secreted SORL1. Interacts with PMEL; this allows the loading of PMEL luminal fragment on ILVs to induce fibril nucleation. Post-translationally, APOE exists as multiple glycosylated and sialylated glycoforms within cells and in plasma. The extent of glycosylation and sialylation are tissue and context specific. In terms of processing, glycated in plasma VLDL. Phosphorylated by FAM20C in the extracellular medium.

It localises to the secreted. Its subcellular location is the extracellular space. The protein resides in the extracellular matrix. It is found in the extracellular vesicle. The protein localises to the endosome. It localises to the multivesicular body. Functionally, APOE is an apolipoprotein, a protein associating with lipid particles, that mainly functions in lipoprotein-mediated lipid transport between organs via the plasma and interstitial fluids. APOE is a core component of plasma lipoproteins and is involved in their production, conversion and clearance. Apolipoproteins are amphipathic molecules that interact both with lipids of the lipoprotein particle core and the aqueous environment of the plasma. As such, APOE associates with chylomicrons, chylomicron remnants, very low density lipoproteins (VLDL) and intermediate density lipoproteins (IDL) but shows a preferential binding to high-density lipoproteins (HDL). It also binds a wide range of cellular receptors including the LDL receptor/LDLR, the LDL receptor-related proteins LRP1, LRP2 and LRP8 and the very low-density lipoprotein receptor/VLDLR that mediate the cellular uptake of the APOE-containing lipoprotein particles. Finally, APOE also has a heparin-binding activity and binds heparan-sulfate proteoglycans on the surface of cells, a property that supports the capture and the receptor-mediated uptake of APOE-containing lipoproteins by cells. A main function of APOE is to mediate lipoprotein clearance through the uptake of chylomicrons, VLDLs, and HDLs by hepatocytes. APOE is also involved in the biosynthesis by the liver of VLDLs as well as their uptake by peripheral tissues ensuring the delivery of triglycerides and energy storage in muscle, heart and adipose tissues. By participating in the lipoprotein-mediated distribution of lipids among tissues, APOE plays a critical role in plasma and tissues lipid homeostasis. APOE is also involved in two steps of reverse cholesterol transport, the HDLs-mediated transport of cholesterol from peripheral tissues to the liver, and thereby plays an important role in cholesterol homeostasis. First, it is functionally associated with ABCA1 in the biogenesis of HDLs in tissues. Second, it is enriched in circulating HDLs and mediates their uptake by hepatocytes. APOE also plays an important role in lipid transport in the central nervous system, regulating neuron survival and sprouting. The polypeptide is Apolipoprotein E (APOE) (Octodon degus (Degu)).